A 239-amino-acid polypeptide reads, in one-letter code: Heptaprenylglyceryl phosphate synthase (239 aa).

K12 is a sn-glycerol 1-phosphate binding site. Mg(2+) contacts are provided by D14 and T40. Sn-glycerol 1-phosphate-binding positions include 159 to 164 (YLEYSG), G189, and 209 to 210 (GN).

It belongs to the GGGP/HepGP synthase family. Group I subfamily. Homodimer. It depends on Mg(2+) as a cofactor.

It catalyses the reaction sn-glycerol 1-phosphate + all-trans-heptaprenyl diphosphate = 3-heptaprenyl-sn-glycero-1-phosphate + diphosphate. It participates in membrane lipid metabolism; glycerophospholipid metabolism. Functionally, prenyltransferase that catalyzes in vivo the transfer of the heptaprenyl moiety of heptaprenyl pyrophosphate (HepPP; 35 carbon atoms) to the C3 hydroxyl of sn-glycerol-1-phosphate (G1P), producing heptaprenylglyceryl phosphate (HepGP). This reaction is an ether-bond-formation step in the biosynthesis of archaea-type G1P-based membrane lipids found in Bacillales. The polypeptide is Heptaprenylglyceryl phosphate synthase (Geobacillus thermodenitrificans (strain NG80-2)).